Reading from the N-terminus, the 368-residue chain is Histidinol-phosphate aminotransferase (368 aa).

Position 229 is an N6-(pyridoxal phosphate)lysine (lysine 229).

The protein belongs to the class-II pyridoxal-phosphate-dependent aminotransferase family. Histidinol-phosphate aminotransferase subfamily. In terms of assembly, homodimer. It depends on pyridoxal 5'-phosphate as a cofactor.

It carries out the reaction L-histidinol phosphate + 2-oxoglutarate = 3-(imidazol-4-yl)-2-oxopropyl phosphate + L-glutamate. It participates in amino-acid biosynthesis; L-histidine biosynthesis; L-histidine from 5-phospho-alpha-D-ribose 1-diphosphate: step 7/9. The protein is Histidinol-phosphate aminotransferase of Acidovorax sp. (strain JS42).